Here is a 961-residue protein sequence, read N- to C-terminus: RNA polymerase II subunit A C-terminal domain phosphatase (961 aa).

Met1 carries the N-acetylmethionine modification. The region spanning 178–344 (HRNRKLVLMV…SRESQTRKKV (167 aa)) is the FCP1 homology domain. The segment at 328 to 589 (DMNAPPGSRE…EEEDTDEDDH (262 aa)) is disordered. Over residues 394–406 (DSPRPGKPDERDI) the composition is skewed to basic and acidic residues. Residue Ser395 is modified to Phosphoserine. Positions 450-462 (LDFDLSSDSESSS) are enriched in acidic residues. Over residues 463 to 475 (ESEGTKSSSSASD) the composition is skewed to low complexity. A compositionally biased stretch (acidic residues) spans 575 to 588 (SMEEEEEEDTDEDD). The BRCT domain maps to 629-728 (LKSKVLADVA…DKVEEQLFPL (100 aa)). 2 positions are modified to phosphoserine: Ser674 and Ser740. Disordered stretches follow at residues 730-752 (DDHT…GVPP) and 780-949 (KLIR…ADEM). Lys780 is subject to N6-acetyllysine. Residues 793–803 (SSSLPIRQEPS) are compositionally biased toward polar residues. A Phosphoserine modification is found at Ser839. A compositionally biased stretch (basic and acidic residues) spans 850–859 (CKEDLESMDK). 2 stretches are compositionally biased toward acidic residues: residues 860 to 873 (EVDD…DDSD) and 937 to 947 (NEDEGSSSEAD). Residues Ser869 and Ser872 each carry the phosphoserine modification.

As to quaternary structure, homodimer. Interacts with GTF2F1. Interacts with WDR77, SNRPB and SNRNP70. In terms of processing, phosphorylated. In the presence of TFIIF, the phosphorylated form has an increased CTD phosphatase activity. The phosphorylation is required for the physical interaction with GTF2F1. Ubiquitously expressed.

The protein localises to the nucleus. The protein resides in the cytoplasm. Its subcellular location is the cytoskeleton. It is found in the microtubule organizing center. It localises to the centrosome. The protein localises to the spindle pole. The protein resides in the midbody. The catalysed reaction is O-phospho-L-seryl-[protein] + H2O = L-seryl-[protein] + phosphate. It catalyses the reaction O-phospho-L-threonyl-[protein] + H2O = L-threonyl-[protein] + phosphate. Its function is as follows. Processively dephosphorylates 'Ser-2' and 'Ser-5' of the heptad repeats YSPTSPS in the C-terminal domain of the largest RNA polymerase II subunit. This promotes the activity of RNA polymerase II. Plays a role in the exit from mitosis by dephosphorylating crucial mitotic substrates (USP44, CDC20 and WEE1) that are required for M-phase-promoting factor (MPF)/CDK1 inactivation. The sequence is that of RNA polymerase II subunit A C-terminal domain phosphatase (CTDP1) from Homo sapiens (Human).